A 125-amino-acid chain; its full sequence is Histone H2A (125 aa).

The span at 1–18 (MSGRGKGGKVKAKAKSRS) shows a compositional bias: basic residues. The tract at residues 1–21 (MSGRGKGGKVKAKAKSRSSRA) is disordered. Serine 2 carries the N-acetylserine modification. The residue at position 2 (serine 2) is a Phosphoserine. Residue lysine 119 forms a Glycyl lysine isopeptide (Lys-Gly) (interchain with G-Cter in ubiquitin) linkage.

Belongs to the histone H2A family. The nucleosome is a histone octamer containing two molecules each of H2A, H2B, H3 and H4 assembled in one H3-H4 heterotetramer and two H2A-H2B heterodimers. The octamer wraps approximately 147 bp of DNA. Monoubiquitination of Lys-119 gives a specific tag for epigenetic transcriptional repression. In terms of processing, phosphorylation on Ser-2 is enhanced during mitosis. Phosphorylation on Ser-2 directly represses transcription.

The protein resides in the nucleus. The protein localises to the chromosome. Its function is as follows. Core component of nucleosome. Nucleosomes wrap and compact DNA into chromatin, limiting DNA accessibility to the cellular machineries which require DNA as a template. Histones thereby play a central role in transcription regulation, DNA repair, DNA replication and chromosomal stability. DNA accessibility is regulated via a complex set of post-translational modifications of histones, also called histone code, and nucleosome remodeling. The chain is Histone H2A from Chironomus thummi thummi (Midge).